An 84-amino-acid chain; its full sequence is Small ribosomal subunit protein bS20 (84 aa).

Residues 1–32 form a disordered region; sequence MPRHESAKKRMRQNEKRQKRNKSQKSRVRTKI.

The protein belongs to the bacterial ribosomal protein bS20 family.

In terms of biological role, binds directly to 16S ribosomal RNA. The polypeptide is Small ribosomal subunit protein bS20 (Salinibacter ruber (strain DSM 13855 / M31)).